Here is a 521-residue protein sequence, read N- to C-terminus: Bifunctional purine biosynthesis protein PurH (521 aa).

One can recognise an MGS-like domain in the interval 1–147 (MAKITRALIS…KNNADVTVVV (147 aa)).

The protein belongs to the PurH family.

The enzyme catalyses (6R)-10-formyltetrahydrofolate + 5-amino-1-(5-phospho-beta-D-ribosyl)imidazole-4-carboxamide = 5-formamido-1-(5-phospho-D-ribosyl)imidazole-4-carboxamide + (6S)-5,6,7,8-tetrahydrofolate. The catalysed reaction is IMP + H2O = 5-formamido-1-(5-phospho-D-ribosyl)imidazole-4-carboxamide. It participates in purine metabolism; IMP biosynthesis via de novo pathway; 5-formamido-1-(5-phospho-D-ribosyl)imidazole-4-carboxamide from 5-amino-1-(5-phospho-D-ribosyl)imidazole-4-carboxamide (10-formyl THF route): step 1/1. The protein operates within purine metabolism; IMP biosynthesis via de novo pathway; IMP from 5-formamido-1-(5-phospho-D-ribosyl)imidazole-4-carboxamide: step 1/1. In Geotalea uraniireducens (strain Rf4) (Geobacter uraniireducens), this protein is Bifunctional purine biosynthesis protein PurH.